A 183-amino-acid chain; its full sequence is uncharacterized protein (183 aa).

The protein belongs to the isochorismatase family.

This is an uncharacterized protein from Bacillus subtilis (strain 168).